The chain runs to 169 residues: Endoribonuclease YbeY (169 aa).

Positions 72 to 95 are disordered; the sequence is GPVAAPRQEPDSPPACRKDSSHAE. Zn(2+) is bound by residues histidine 131, histidine 135, and histidine 141.

The protein belongs to the endoribonuclease YbeY family. Requires Zn(2+) as cofactor.

The protein resides in the cytoplasm. Single strand-specific metallo-endoribonuclease involved in late-stage 70S ribosome quality control and in maturation of the 3' terminus of the 16S rRNA. This Oleidesulfovibrio alaskensis (strain ATCC BAA-1058 / DSM 17464 / G20) (Desulfovibrio alaskensis) protein is Endoribonuclease YbeY.